A 402-amino-acid polypeptide reads, in one-letter code: 4-hydroxy-3-methylbut-2-enyl diphosphate reductase (402 aa).

Cys-66 lines the [4Fe-4S] cluster pocket. His-96 lines the (2E)-4-hydroxy-3-methylbut-2-enyl diphosphate pocket. His-96 provides a ligand contact to dimethylallyl diphosphate. His-96 is a binding site for isopentenyl diphosphate. A [4Fe-4S] cluster-binding site is contributed by Cys-157. Residue His-185 coordinates (2E)-4-hydroxy-3-methylbut-2-enyl diphosphate. His-185 lines the dimethylallyl diphosphate pocket. Residue His-185 coordinates isopentenyl diphosphate. Glu-187 serves as the catalytic Proton donor. Thr-250 contacts (2E)-4-hydroxy-3-methylbut-2-enyl diphosphate. Cys-288 is a [4Fe-4S] cluster binding site. The (2E)-4-hydroxy-3-methylbut-2-enyl diphosphate site is built by Ser-317, Ser-318, Asn-319, and Ser-379. Positions 317, 318, 319, and 379 each coordinate dimethylallyl diphosphate. Ser-317, Ser-318, Asn-319, and Ser-379 together coordinate isopentenyl diphosphate.

It belongs to the IspH family. [4Fe-4S] cluster is required as a cofactor.

It carries out the reaction isopentenyl diphosphate + 2 oxidized [2Fe-2S]-[ferredoxin] + H2O = (2E)-4-hydroxy-3-methylbut-2-enyl diphosphate + 2 reduced [2Fe-2S]-[ferredoxin] + 2 H(+). It catalyses the reaction dimethylallyl diphosphate + 2 oxidized [2Fe-2S]-[ferredoxin] + H2O = (2E)-4-hydroxy-3-methylbut-2-enyl diphosphate + 2 reduced [2Fe-2S]-[ferredoxin] + 2 H(+). Its pathway is isoprenoid biosynthesis; dimethylallyl diphosphate biosynthesis; dimethylallyl diphosphate from (2E)-4-hydroxy-3-methylbutenyl diphosphate: step 1/1. The protein operates within isoprenoid biosynthesis; isopentenyl diphosphate biosynthesis via DXP pathway; isopentenyl diphosphate from 1-deoxy-D-xylulose 5-phosphate: step 6/6. In terms of biological role, catalyzes the conversion of 1-hydroxy-2-methyl-2-(E)-butenyl 4-diphosphate (HMBPP) into a mixture of isopentenyl diphosphate (IPP) and dimethylallyl diphosphate (DMAPP). Acts in the terminal step of the DOXP/MEP pathway for isoprenoid precursor biosynthesis. The polypeptide is 4-hydroxy-3-methylbut-2-enyl diphosphate reductase (Crocosphaera subtropica (strain ATCC 51142 / BH68) (Cyanothece sp. (strain ATCC 51142))).